The sequence spans 811 residues: Glycerol-3-phosphate acyltransferase (811 aa).

The HXXXXD motif motif lies at C309–M314.

The protein belongs to the GPAT/DAPAT family.

It is found in the cell inner membrane. It catalyses the reaction sn-glycerol 3-phosphate + an acyl-CoA = a 1-acyl-sn-glycero-3-phosphate + CoA. The protein operates within phospholipid metabolism; CDP-diacylglycerol biosynthesis; CDP-diacylglycerol from sn-glycerol 3-phosphate: step 1/3. In Colwellia psychrerythraea (strain 34H / ATCC BAA-681) (Vibrio psychroerythus), this protein is Glycerol-3-phosphate acyltransferase.